The following is a 339-amino-acid chain: Geranylgeranyl transferase type-2 subunit beta (339 aa).

A Phosphothreonine modification is found at threonine 11. 6 PFTB repeats span residues 28–69 (LEKH…DLMG), 76–117 (REEI…TLYD), 124–165 (VDKV…ALLG), 172–213 (VEKA…AITS), 220–261 (SDLL…KIIG), and 268–310 (REKL…SLLG). Geranylgeranyl diphosphate-binding positions include 198–200 (HAG) and 240–243 (RPEK). Zn(2+) contacts are provided by aspartate 246 and cysteine 248. Residues tyrosine 249 and 249–252 (YSWW) contribute to the geranylgeranyl diphosphate site. Zn(2+) is bound at residue histidine 298.

The protein belongs to the protein prenyltransferase subunit beta family. Heterotrimer composed of RABGGTA, RABGGTB and CHM; within this trimer, RABGGTA and RABGGTB form the catalytic component B, while CHM (component A) mediates peptide substrate binding. The Rab GGTase dimer (RGGT) interacts with CHM (component A) prior to Rab protein binding; the association is stabilized by geranylgeranyl pyrophosphate (GGpp). The CHM:RGGT:Rab complex is destabilized by GGpp. Interaction of RABGGTB with prenylated PTP4A2 precludes its association with RABGGTA and inhibits enzyme activity. Interacts with CHODL. Interacts with non-phosphorylated form of RAB8A; phosphorylation of RAB8A at 'Thr-72' disrupts this interaction. Zn(2+) is required as a cofactor. As to expression, ubiquitous. Detected in all the major organs in adult animals.

The catalysed reaction is geranylgeranyl diphosphate + L-cysteinyl-[protein] = S-geranylgeranyl-L-cysteinyl-[protein] + diphosphate. Its activity is regulated as follows. The enzymatic reaction requires the aid of a Rab escort protein (also called component A), such as CHM. In terms of biological role, catalyzes the transfer of a geranylgeranyl moiety from geranylgeranyl diphosphate to both cysteines of Rab proteins with the C-terminal sequence -XXCC, -XCXC and -CCXX, such as RAB1A, RAB3A, RAB5A and RAB7A. The sequence is that of Geranylgeranyl transferase type-2 subunit beta (Rabggtb) from Mus musculus (Mouse).